A 246-amino-acid polypeptide reads, in one-letter code: MNDWMPIAKEYDPLKAGSIDGTDEDPHDRAVWRAMLARYVPNKGVIGDPLLTLFVARLNLQTKEDKLKEVFSRYGDIRRLRLVRDLVTGFSKGYAFIEYKEERAVIKAYRDADGLVIDQHEIFVDYELERTLKGWIPRRLGGGLGGKKESGQLRFGGRDRPFRKPINLPVVKNDLYREGKRERRERSRSRERHWDSRTRDRDHDRGREKRWQEREPTRVWPDNDWERERDFRDDRIKGREKKERGK.

In terms of domain architecture, RRM spans L51–E129. A Glycyl lysine isopeptide (Lys-Gly) (interchain with G-Cter in SUMO2) cross-link involves residue K172. Residues S187–T217 form a disordered region. Residues R192 to T217 are compositionally biased toward basic and acidic residues.

In terms of assembly, component of the U11/U12 snRNPs that are part of the U12-type spliceosome. In terms of tissue distribution, expressed in heart, liver, skeletal muscle and pancreas.

It localises to the nucleus. The protein is U11/U12 small nuclear ribonucleoprotein 35 kDa protein (SNRNP35) of Homo sapiens (Human).